The primary structure comprises 267 residues: 4-hydroxy-tetrahydrodipicolinate reductase (267 aa).

Residues 8–13 (GAAGRM) and Asp34 contribute to the NAD(+) site. Residue Arg35 coordinates NADP(+). Residues 98-100 (GTT) and 122-125 (AANF) each bind NAD(+). His155 (proton donor/acceptor) is an active-site residue. His156 serves as a coordination point for (S)-2,3,4,5-tetrahydrodipicolinate. Lys159 functions as the Proton donor in the catalytic mechanism. Position 165–166 (165–166 (GT)) interacts with (S)-2,3,4,5-tetrahydrodipicolinate.

Belongs to the DapB family.

The protein localises to the cytoplasm. The enzyme catalyses (S)-2,3,4,5-tetrahydrodipicolinate + NAD(+) + H2O = (2S,4S)-4-hydroxy-2,3,4,5-tetrahydrodipicolinate + NADH + H(+). It catalyses the reaction (S)-2,3,4,5-tetrahydrodipicolinate + NADP(+) + H2O = (2S,4S)-4-hydroxy-2,3,4,5-tetrahydrodipicolinate + NADPH + H(+). It functions in the pathway amino-acid biosynthesis; L-lysine biosynthesis via DAP pathway; (S)-tetrahydrodipicolinate from L-aspartate: step 4/4. Its function is as follows. Catalyzes the conversion of 4-hydroxy-tetrahydrodipicolinate (HTPA) to tetrahydrodipicolinate. In Pseudomonas putida (strain GB-1), this protein is 4-hydroxy-tetrahydrodipicolinate reductase.